We begin with the raw amino-acid sequence, 282 residues long: Pantothenate synthetase (282 aa).

Residue 30 to 37 coordinates ATP; sequence MGNLHEGH. Histidine 37 functions as the Proton donor in the catalytic mechanism. (R)-pantoate is bound at residue glutamine 61. Residue glutamine 61 participates in beta-alanine binding. ATP is bound at residue 149-152; it reads GEKD. Glutamine 155 contributes to the (R)-pantoate binding site. Residues valine 178 and 186-189 each bind ATP; that span reads KSSR.

This sequence belongs to the pantothenate synthetase family. In terms of assembly, homodimer.

It is found in the cytoplasm. It catalyses the reaction (R)-pantoate + beta-alanine + ATP = (R)-pantothenate + AMP + diphosphate + H(+). Its pathway is cofactor biosynthesis; (R)-pantothenate biosynthesis; (R)-pantothenate from (R)-pantoate and beta-alanine: step 1/1. Functionally, catalyzes the condensation of pantoate with beta-alanine in an ATP-dependent reaction via a pantoyl-adenylate intermediate. In Marinobacter nauticus (strain ATCC 700491 / DSM 11845 / VT8) (Marinobacter aquaeolei), this protein is Pantothenate synthetase.